We begin with the raw amino-acid sequence, 147 residues long: Lysozyme C (147 aa).

Positions 1-18 are cleaved as a signal peptide; sequence MRSLLILVLCFLPLAALG. The C-type lysozyme domain maps to 19 to 147; the sequence is KVYGRCELAA…VHAWIRGCRL (129 aa). 4 cysteine pairs are disulfide-bonded: C24/C145, C48/C133, C82/C98, and C94/C112.

This sequence belongs to the glycosyl hydrolase 22 family. In terms of assembly, monomer.

It is found in the secreted. It carries out the reaction Hydrolysis of (1-&gt;4)-beta-linkages between N-acetylmuramic acid and N-acetyl-D-glucosamine residues in a peptidoglycan and between N-acetyl-D-glucosamine residues in chitodextrins.. In terms of biological role, lysozymes have primarily a bacteriolytic function; those in tissues and body fluids are associated with the monocyte-macrophage system and enhance the activity of immunoagents. This chain is Lysozyme C (LYZ), found in Meleagris gallopavo (Wild turkey).